Consider the following 81-residue polypeptide: Accessory gland protein Acp63F (81 aa).

The N-terminal stretch at 1 to 16 (MKAIIVFILFISSVHA) is a signal peptide.

As to expression, main cells of accessory gland and seminal fluid.

The protein resides in the secreted. Functionally, responsible for physiological and behavioral changes in mated female flies. In Drosophila melanogaster (Fruit fly), this protein is Accessory gland protein Acp63F (Acp63F).